A 930-amino-acid chain; its full sequence is Isoleucine--tRNA ligase (930 aa).

The short motif at 57–67 (PYANGNIHVGH) is the 'HIGH' region element. Glutamate 554 contributes to the L-isoleucyl-5'-AMP binding site. A 'KMSKS' region motif is present at residues 595–599 (KMSKS). Lysine 598 is an ATP binding site.

Belongs to the class-I aminoacyl-tRNA synthetase family. IleS type 1 subfamily. As to quaternary structure, monomer.

Its subcellular location is the cytoplasm. The catalysed reaction is tRNA(Ile) + L-isoleucine + ATP = L-isoleucyl-tRNA(Ile) + AMP + diphosphate. In terms of biological role, catalyzes the attachment of isoleucine to tRNA(Ile). As IleRS can inadvertently accommodate and process structurally similar amino acids such as valine, to avoid such errors it has two additional distinct tRNA(Ile)-dependent editing activities. One activity is designated as 'pretransfer' editing and involves the hydrolysis of activated Val-AMP. The other activity is designated 'posttransfer' editing and involves deacylation of mischarged Val-tRNA(Ile). This chain is Isoleucine--tRNA ligase, found in Streptococcus agalactiae serotype III (strain NEM316).